We begin with the raw amino-acid sequence, 309 residues long: Homoserine kinase (309 aa).

91-101 (PIGSGLGSSAC) is a binding site for ATP.

The protein belongs to the GHMP kinase family. Homoserine kinase subfamily.

It localises to the cytoplasm. It carries out the reaction L-homoserine + ATP = O-phospho-L-homoserine + ADP + H(+). It participates in amino-acid biosynthesis; L-threonine biosynthesis; L-threonine from L-aspartate: step 4/5. Functionally, catalyzes the ATP-dependent phosphorylation of L-homoserine to L-homoserine phosphate. The protein is Homoserine kinase (thrB) of Serratia marcescens.